The following is a 248-amino-acid chain: Large ribosomal subunit protein uL4 (248 aa).

2 disordered regions span residues 72 to 103 (RSEN…KSLN) and 173 to 210 (GRSV…RNLS). Basic and acidic residues predominate over residues 92 to 103 (PKAEKDQTKSLN). A compositionally biased stretch (basic residues) spans 177-189 (RAGRGKTRGRKYS).

This sequence belongs to the universal ribosomal protein uL4 family. Part of the 50S ribosomal subunit.

Functionally, one of the primary rRNA binding proteins, this protein initially binds near the 5'-end of the 23S rRNA. It is important during the early stages of 50S assembly. It makes multiple contacts with different domains of the 23S rRNA in the assembled 50S subunit and ribosome. In terms of biological role, forms part of the polypeptide exit tunnel. The sequence is that of Large ribosomal subunit protein uL4 from Halorubrum lacusprofundi (strain ATCC 49239 / DSM 5036 / JCM 8891 / ACAM 34).